Consider the following 134-residue polypeptide: Retinol-binding protein 2 (134 aa).

Lys41 and Gln109 together coordinate all-trans-retinol.

The protein belongs to the calycin superfamily. Fatty-acid binding protein (FABP) family. Expressed in prenatal liver, intestine and lung, and in adult intestine.

The protein resides in the cytoplasm. In terms of biological role, intracellular transport of retinol. The chain is Retinol-binding protein 2 (Rbp2) from Mus musculus (Mouse).